Here is a 181-residue protein sequence, read N- to C-terminus: NADH-quinone oxidoreductase subunit I (181 aa).

2 4Fe-4S ferredoxin-type domains span residues 52-81 (TRDS…LKKG) and 91-120 (KFFR…LTPD). Cys61, Cys64, Cys67, Cys71, Cys100, Cys103, Cys106, and Cys110 together coordinate [4Fe-4S] cluster.

Belongs to the complex I 23 kDa subunit family. NDH-1 is composed of 13 different subunits. Subunits NuoA, H, J, K, L, M, N constitute the membrane sector of the complex. It depends on [4Fe-4S] cluster as a cofactor.

It is found in the cell inner membrane. The enzyme catalyses a quinone + NADH + 5 H(+)(in) = a quinol + NAD(+) + 4 H(+)(out). Functionally, NDH-1 shuttles electrons from NADH, via FMN and iron-sulfur (Fe-S) centers, to quinones in the respiratory chain. The immediate electron acceptor for the enzyme in this species is believed to be ubiquinone. Couples the redox reaction to proton translocation (for every two electrons transferred, four hydrogen ions are translocated across the cytoplasmic membrane), and thus conserves the redox energy in a proton gradient. In Blochmanniella pennsylvanica (strain BPEN), this protein is NADH-quinone oxidoreductase subunit I.